The sequence spans 337 residues: Quinolinate synthase (337 aa).

Residues His38 and Ser59 each contribute to the iminosuccinate site. Cys104 is a binding site for [4Fe-4S] cluster. Iminosuccinate-binding positions include 130 to 132 (YAN) and Ser147. Residue Cys191 participates in [4Fe-4S] cluster binding. Residues 217–219 (HPE) and Thr234 contribute to the iminosuccinate site. Cys288 lines the [4Fe-4S] cluster pocket.

The protein belongs to the quinolinate synthase family. Type 1 subfamily. Requires [4Fe-4S] cluster as cofactor.

The protein localises to the cytoplasm. The catalysed reaction is iminosuccinate + dihydroxyacetone phosphate = quinolinate + phosphate + 2 H2O + H(+). It participates in cofactor biosynthesis; NAD(+) biosynthesis; quinolinate from iminoaspartate: step 1/1. Functionally, catalyzes the condensation of iminoaspartate with dihydroxyacetone phosphate to form quinolinate. This chain is Quinolinate synthase, found in Wigglesworthia glossinidia brevipalpis.